Consider the following 476-residue polypeptide: Aspartyl/glutamyl-tRNA(Asn/Gln) amidotransferase subunit B (476 aa).

It belongs to the GatB/GatE family. GatB subfamily. In terms of assembly, heterotrimer of A, B and C subunits.

The enzyme catalyses L-glutamyl-tRNA(Gln) + L-glutamine + ATP + H2O = L-glutaminyl-tRNA(Gln) + L-glutamate + ADP + phosphate + H(+). It carries out the reaction L-aspartyl-tRNA(Asn) + L-glutamine + ATP + H2O = L-asparaginyl-tRNA(Asn) + L-glutamate + ADP + phosphate + 2 H(+). Allows the formation of correctly charged Asn-tRNA(Asn) or Gln-tRNA(Gln) through the transamidation of misacylated Asp-tRNA(Asn) or Glu-tRNA(Gln) in organisms which lack either or both of asparaginyl-tRNA or glutaminyl-tRNA synthetases. The reaction takes place in the presence of glutamine and ATP through an activated phospho-Asp-tRNA(Asn) or phospho-Glu-tRNA(Gln). The chain is Aspartyl/glutamyl-tRNA(Asn/Gln) amidotransferase subunit B from Bacillus pumilus (strain SAFR-032).